Here is a 468-residue protein sequence, read N- to C-terminus: UDP-N-acetylmuramate--L-alanine ligase (468 aa).

ATP is bound at residue 118-124 (GTHGKTT).

It belongs to the MurCDEF family.

The protein localises to the cytoplasm. The catalysed reaction is UDP-N-acetyl-alpha-D-muramate + L-alanine + ATP = UDP-N-acetyl-alpha-D-muramoyl-L-alanine + ADP + phosphate + H(+). It functions in the pathway cell wall biogenesis; peptidoglycan biosynthesis. Cell wall formation. This chain is UDP-N-acetylmuramate--L-alanine ligase, found in Roseobacter denitrificans (strain ATCC 33942 / OCh 114) (Erythrobacter sp. (strain OCh 114)).